The primary structure comprises 138 residues: MNSDRIIKKYPNRRLYDTEVSRYITLADVRNLVMDCTSFKVVDTANESDITRSILLQIMLEEETGGEPLFSASMLAQIIRFYGGTLQGMFARYLESSLDLFAKQQQDMTKTLGDNPFEAMTRMTQKNVEIWADMQEEF.

This is an uncharacterized protein from Thiocystis violacea.